The following is a 106-amino-acid chain: MARSLCFMAFAVLAMMLFVAYEVQAKSTCKAESNTFPGLCITKPPCRKACLSEKFTDGKCSKILRRCICYKPCVFDGKMIQTGAENLAEEAETLAAALLEEEMMDN.

An N-terminal signal peptide occupies residues 1–25 (MARSLCFMAFAVLAMMLFVAYEVQA). 4 disulfides stabilise this stretch: Cys-29-Cys-73, Cys-40-Cys-60, Cys-46-Cys-67, and Cys-50-Cys-69.

This sequence belongs to the DEFL family.

The protein localises to the secreted. It localises to the vacuole. This Nicotiana paniculata protein is Defensin-like protein 1 (THIO1).